We begin with the raw amino-acid sequence, 213 residues long: Eukaryotic translation initiation factor isoform 4E (213 aa).

A disordered region spans residues 1 to 37; it reads MATEVAAAVPPPQLDAEENSGLEAAAAEAKIQPSSGP. MRNA-binding positions include 56-61, K88, and 106-107; these read QGAAWG and WE. Residues C111 and C150 are joined by a disulfide bond. Residues 157–162 and 202–205 each bind mRNA; these read RQRQDK and KRER.

The protein belongs to the eukaryotic initiation factor 4E family. In terms of assembly, EIF4F is a multi-subunit complex, the composition of which varies with external and internal environmental conditions. It is composed of at least EIF4A, EIF4E and EIF4G. EIF4E is also known to interact with other partners. In higher plants two isoforms of EIF4F have been identified, named isoform EIF4F and isoform EIF(iso)4F. Isoform EIF4F has subunits p220 and p26, whereas isoform EIF(iso)4F has subunits p82 and p28. As to quaternary structure, (Microbial infection) Interacts with potyvirus viral genome-linked protein (VPg) of plum pox virus (PPV) strain D both in nucleus and cytoplasm; this interaction is possible in susceptible hosts but is impaired in resistant plants. In terms of processing, according to the redox status, the Cys-111-Cys-150 disulfide bridge may have a role in regulating protein function by affecting its ability to bind capped mRNA. Mostly expressed in leaves, flower buds, leaf buds and anthers, to a lower extent in roots, stems and green immature fruit, and, at low levels, in petals.

It localises to the cytoplasm. The protein localises to the nucleus. Its function is as follows. Component of the protein complex eIF4F, which is involved in the recognition of the mRNA cap, ATP-dependent unwinding of 5'-terminal secondary structure and recruitment of mRNA to the ribosome. Recognizes and binds the 7-methylguanosine-containing mRNA cap during an early step in the initiation of protein synthesis and facilitates ribosome binding by inducing the unwinding of the mRNAs secondary structures. Key component of recessive resistance to potyviruses such as the plum pox virus (PPV) strain D. (Microbial infection) Susceptibility host factor required for viral infection by recruiting viral RNAs to the host ribosomal complex via an interaction with viral genome-linked protein (VPg). This Prunus domestica (Garden plum) protein is Eukaryotic translation initiation factor isoform 4E.